A 269-amino-acid chain; its full sequence is MPELPEVETSRRGIEPHLVGATILHAVVRNGRLRWPVSEEIYRLSDQPVLSVQRRAKYLLLELPEGWIIIHLGMSGSLRILPEELPPEKHDHVDLVMSNGKVLRYTDPRRFGAWLWTKELEGHNVLAHLGPEPLSDDFNGEYLHQKCEKKKTAIKPWLMDNKLVVGVGNIYASESLFAAGIHPDRLASSLSLAECELLARVIKAVLLRSIEQGGTTLKDFLQSDGKPGYFAQELQVYGRKGEPCRVCGTPIVATKHAQRATFYCRQCQK.

Catalysis depends on proline 2, which acts as the Schiff-base intermediate with DNA. Glutamate 3 acts as the Proton donor in catalysis. Catalysis depends on lysine 57, which acts as the Proton donor; for beta-elimination activity. Residues histidine 90, arginine 109, and lysine 150 each coordinate DNA. An FPG-type zinc finger spans residues 235–269; it reads QVYGRKGEPCRVCGTPIVATKHAQRATFYCRQCQK. Arginine 259 acts as the Proton donor; for delta-elimination activity in catalysis.

Belongs to the FPG family. As to quaternary structure, monomer. The cofactor is Zn(2+).

It carries out the reaction Hydrolysis of DNA containing ring-opened 7-methylguanine residues, releasing 2,6-diamino-4-hydroxy-5-(N-methyl)formamidopyrimidine.. It catalyses the reaction 2'-deoxyribonucleotide-(2'-deoxyribose 5'-phosphate)-2'-deoxyribonucleotide-DNA = a 3'-end 2'-deoxyribonucleotide-(2,3-dehydro-2,3-deoxyribose 5'-phosphate)-DNA + a 5'-end 5'-phospho-2'-deoxyribonucleoside-DNA + H(+). Its function is as follows. Involved in base excision repair of DNA damaged by oxidation or by mutagenic agents. Acts as a DNA glycosylase that recognizes and removes damaged bases. Has a preference for oxidized purines, such as 7,8-dihydro-8-oxoguanine (8-oxoG). Has AP (apurinic/apyrimidinic) lyase activity and introduces nicks in the DNA strand. Cleaves the DNA backbone by beta-delta elimination to generate a single-strand break at the site of the removed base with both 3'- and 5'-phosphates. This is Formamidopyrimidine-DNA glycosylase from Escherichia coli O6:H1 (strain CFT073 / ATCC 700928 / UPEC).